A 274-amino-acid polypeptide reads, in one-letter code: Small ribosomal subunit biogenesis GTPase RsgA (274 aa).

Residues 58 to 215 (KNYLNRPKVA…LVDSPGFSIY (158 aa)) enclose the CP-type G domain. GTP-binding positions include 108 to 111 (SKLD) and 158 to 166 (GHSGVGKST). Residues C238, C243, H245, and C252 each coordinate Zn(2+).

It belongs to the TRAFAC class YlqF/YawG GTPase family. RsgA subfamily. As to quaternary structure, monomer. Associates with 30S ribosomal subunit, binds 16S rRNA. The cofactor is Zn(2+).

The protein localises to the cytoplasm. Functionally, one of several proteins that assist in the late maturation steps of the functional core of the 30S ribosomal subunit. Helps release RbfA from mature subunits. May play a role in the assembly of ribosomal proteins into the subunit. Circularly permuted GTPase that catalyzes slow GTP hydrolysis, GTPase activity is stimulated by the 30S ribosomal subunit. In Mycoplasmoides gallisepticum (strain R(low / passage 15 / clone 2)) (Mycoplasma gallisepticum), this protein is Small ribosomal subunit biogenesis GTPase RsgA.